Consider the following 875-residue polypeptide: Phosphoenolpyruvate carboxylase (875 aa).

Residues His137 and Lys542 contribute to the active site.

The protein belongs to the PEPCase type 1 family. Requires Mg(2+) as cofactor.

The catalysed reaction is oxaloacetate + phosphate = phosphoenolpyruvate + hydrogencarbonate. Functionally, forms oxaloacetate, a four-carbon dicarboxylic acid source for the tricarboxylic acid cycle. The polypeptide is Phosphoenolpyruvate carboxylase (Pseudomonas entomophila (strain L48)).